Here is a 258-residue protein sequence, read N- to C-terminus: Acetylglutamate kinase (258 aa).

Residues 41 to 42 (GG), arginine 63, and asparagine 156 contribute to the substrate site.

The protein belongs to the acetylglutamate kinase family. ArgB subfamily.

The protein localises to the cytoplasm. It carries out the reaction N-acetyl-L-glutamate + ATP = N-acetyl-L-glutamyl 5-phosphate + ADP. Its pathway is amino-acid biosynthesis; L-arginine biosynthesis; N(2)-acetyl-L-ornithine from L-glutamate: step 2/4. Catalyzes the ATP-dependent phosphorylation of N-acetyl-L-glutamate. The protein is Acetylglutamate kinase of Geobacillus thermodenitrificans (strain NG80-2).